A 116-amino-acid chain; its full sequence is Prefoldin subunit beta (116 aa).

It belongs to the prefoldin subunit beta family. As to quaternary structure, heterohexamer of two alpha and four beta subunits.

The protein localises to the cytoplasm. Functionally, molecular chaperone capable of stabilizing a range of proteins. Seems to fulfill an ATP-independent, HSP70-like function in archaeal de novo protein folding. This chain is Prefoldin subunit beta, found in Thermococcus onnurineus (strain NA1).